We begin with the raw amino-acid sequence, 201 residues long: 3-isopropylmalate dehydratase small subunit (201 aa).

This sequence belongs to the LeuD family. LeuD type 1 subfamily. In terms of assembly, heterodimer of LeuC and LeuD.

The enzyme catalyses (2R,3S)-3-isopropylmalate = (2S)-2-isopropylmalate. It functions in the pathway amino-acid biosynthesis; L-leucine biosynthesis; L-leucine from 3-methyl-2-oxobutanoate: step 2/4. In terms of biological role, catalyzes the isomerization between 2-isopropylmalate and 3-isopropylmalate, via the formation of 2-isopropylmaleate. The chain is 3-isopropylmalate dehydratase small subunit from Brucella anthropi (strain ATCC 49188 / DSM 6882 / CCUG 24695 / JCM 21032 / LMG 3331 / NBRC 15819 / NCTC 12168 / Alc 37) (Ochrobactrum anthropi).